Here is a 645-residue protein sequence, read N- to C-terminus: Zinc finger protein 64 (645 aa).

3 C2H2-type zinc fingers span residues 175 to 197 (HKCE…MRCH), 203 to 225 (YKCK…LRIH), and 231 to 253 (FKCQ…LRSH). A Glycyl lysine isopeptide (Lys-Gly) (interchain with G-Cter in SUMO2) cross-link involves residue glutamate 286. A C2H2-type 4; atypical zinc finger spans residues 299–324 (FNCCYPGCHFKTVHGMKDLDRHLRIH). C2H2-type zinc fingers lie at residues 330–352 (HKCE…MRCH), 358–380 (HKCH…LRIH), 386–408 (YKCQ…LRSH), 414–436 (FQCW…MIVH), 442–465 (FKCE…RIKH), 467–489 (FKCL…SRLH), 495–517 (EKCP…SRVH), 523–546 (FKCD…DKVH), and 580–602 (FRCE…KKQH). Asparagine 397 participates in a covalent cross-link: Glycyl lysine isopeptide (Lys-Gly) (interchain with G-Cter in SUMO2). Composition is skewed to basic and acidic residues over residues 543–554 (DKVHRDEAKTEN) and 600–610 (KQHSDQSENKN). Disordered stretches follow at residues 543–567 (DKVH…REGS) and 600–645 (KQHS…SQDL). The residue at position 545 (valine 545) is a Phosphoserine. The span at 622–631 (ASGQLSTLVS) shows a compositional bias: polar residues.

Belongs to the krueppel C2H2-type zinc-finger protein family. As to quaternary structure, interacts with ZNF70; this interaction promote the transactivation of the HES1 gene. Interacts with NOTCH1.

The protein localises to the nucleus. In terms of biological role, may be involved in the regulation of mesenchymal cell differentiation through transactivation of NOTCH1 target genes. The polypeptide is Zinc finger protein 64 (Homo sapiens (Human)).